Reading from the N-terminus, the 286-residue chain is ATP synthase gamma chain (286 aa).

The protein belongs to the ATPase gamma chain family. In terms of assembly, F-type ATPases have 2 components, CF(1) - the catalytic core - and CF(0) - the membrane proton channel. CF(1) has five subunits: alpha(3), beta(3), gamma(1), delta(1), epsilon(1). CF(0) has three main subunits: a, b and c.

The protein resides in the cell inner membrane. Its function is as follows. Produces ATP from ADP in the presence of a proton gradient across the membrane. The gamma chain is believed to be important in regulating ATPase activity and the flow of protons through the CF(0) complex. The chain is ATP synthase gamma chain from Pseudomonas syringae pv. tomato (strain ATCC BAA-871 / DC3000).